We begin with the raw amino-acid sequence, 212 residues long: Large ribosomal subunit protein uL3 (212 aa).

Belongs to the universal ribosomal protein uL3 family. In terms of assembly, part of the 50S ribosomal subunit. Forms a cluster with proteins L14 and L19.

In terms of biological role, one of the primary rRNA binding proteins, it binds directly near the 3'-end of the 23S rRNA, where it nucleates assembly of the 50S subunit. This Acetivibrio thermocellus (strain ATCC 27405 / DSM 1237 / JCM 9322 / NBRC 103400 / NCIMB 10682 / NRRL B-4536 / VPI 7372) (Clostridium thermocellum) protein is Large ribosomal subunit protein uL3.